We begin with the raw amino-acid sequence, 549 residues long: Hydroxylamine reductase (549 aa).

Residues cysteine 3, cysteine 6, cysteine 15, and cysteine 21 each coordinate [4Fe-4S] cluster. 8 residues coordinate hybrid [4Fe-2O-2S] cluster: histidine 248, glutamate 272, cysteine 316, cysteine 403, cysteine 431, cysteine 456, glutamate 490, and lysine 492. Cysteine 403 bears the Cysteine persulfide mark.

The protein belongs to the HCP family. It depends on [4Fe-4S] cluster as a cofactor. Hybrid [4Fe-2O-2S] cluster serves as cofactor.

The protein resides in the cytoplasm. It carries out the reaction A + NH4(+) + H2O = hydroxylamine + AH2 + H(+). Functionally, catalyzes the reduction of hydroxylamine to form NH(3) and H(2)O. The chain is Hydroxylamine reductase from Rhodospirillum rubrum (strain ATCC 11170 / ATH 1.1.1 / DSM 467 / LMG 4362 / NCIMB 8255 / S1).